A 151-amino-acid chain; its full sequence is Large ribosomal subunit protein uL13 (151 aa).

This sequence belongs to the universal ribosomal protein uL13 family. As to quaternary structure, part of the 50S ribosomal subunit.

Its function is as follows. This protein is one of the early assembly proteins of the 50S ribosomal subunit, although it is not seen to bind rRNA by itself. It is important during the early stages of 50S assembly. The protein is Large ribosomal subunit protein uL13 of Synechocystis sp. (strain ATCC 27184 / PCC 6803 / Kazusa).